The primary structure comprises 127 residues: Translation initiation factor 5A (127 aa).

At Lys36 the chain carries Hypusine.

The protein belongs to the eIF-5A family.

The protein resides in the cytoplasm. In terms of biological role, functions by promoting the formation of the first peptide bond. The sequence is that of Translation initiation factor 5A (eif5a) from Halobacterium salinarum (strain ATCC 700922 / JCM 11081 / NRC-1) (Halobacterium halobium).